The following is a 364-amino-acid chain: Cyclin-D3-2 (364 aa).

Residues 331 to 364 are disordered; it reads PPGRPIKRGAAAATTADPLPADEESRDAWPPYAA. A compositionally biased stretch (low complexity) spans 340-349; that stretch reads AAAATTADPL.

The protein belongs to the cyclin family. Cyclin D subfamily.

The sequence is that of Cyclin-D3-2 (CYCD3-2) from Oryza sativa subsp. japonica (Rice).